We begin with the raw amino-acid sequence, 286 residues long: 4-hydroxybenzoate octaprenyltransferase (286 aa).

7 consecutive transmembrane segments (helical) span residues 21-40, 95-115, 142-162, 167-187, 210-230, 235-255, and 266-286; these read GTLL…AGGM, ILFV…NGLV, FLGI…TGEV, WWLF…YAMV, QIIG…GWSA, LYGL…MLIF, and FLNN…DYLI.

The protein belongs to the UbiA prenyltransferase family. Requires Mg(2+) as cofactor.

The protein localises to the cell inner membrane. The catalysed reaction is all-trans-octaprenyl diphosphate + 4-hydroxybenzoate = 4-hydroxy-3-(all-trans-octaprenyl)benzoate + diphosphate. It participates in cofactor biosynthesis; ubiquinone biosynthesis. In terms of biological role, catalyzes the prenylation of para-hydroxybenzoate (PHB) with an all-trans polyprenyl group. Mediates the second step in the final reaction sequence of ubiquinone-8 (UQ-8) biosynthesis, which is the condensation of the polyisoprenoid side chain with PHB, generating the first membrane-bound Q intermediate 3-octaprenyl-4-hydroxybenzoate. This chain is 4-hydroxybenzoate octaprenyltransferase, found in Shewanella baltica (strain OS223).